The following is a 365-amino-acid chain: Pituitary-specific positive transcription factor 1 (365 aa).

The 9aaTAD motif lies at Ala5–Thr12. The interval Pro160–Pro191 is disordered. The segment covering Lys173–Asp183 has biased composition (basic and acidic residues). The region spanning Met188 to Glu262 is the POU-specific domain. A DNA-binding region (homeobox) is located at residues Lys278–Lys337.

It belongs to the POU transcription factor family. Class-1 subfamily.

It is found in the nucleus. Functionally, transcription factor that activates growth hormone and prolactin genes. Specifically binds to the consensus sequence 5'-TAAAT-3'. This Oncorhynchus keta (Chum salmon) protein is Pituitary-specific positive transcription factor 1 (pou1f1).